Here is an 829-residue protein sequence, read N- to C-terminus: Probable beta-glucosidase H (829 aa).

Asn13 is a glycosylation site (N-linked (GlcNAc...) asparagine). Asp225 is a catalytic residue. 6 N-linked (GlcNAc...) asparagine glycosylation sites follow: Asn304, Asn473, Asn602, Asn627, Asn664, and Asn749. One can recognise a PA14 domain in the interval 389-548 (RMLSNAVIHF…DPEQMVANAV (160 aa)).

The protein belongs to the glycosyl hydrolase 3 family.

Its subcellular location is the secreted. The enzyme catalyses Hydrolysis of terminal, non-reducing beta-D-glucosyl residues with release of beta-D-glucose.. Its pathway is glycan metabolism; cellulose degradation. Functionally, beta-glucosidases are one of a number of cellulolytic enzymes involved in the degradation of cellulosic biomass. Catalyzes the last step releasing glucose from the inhibitory cellobiose. This is Probable beta-glucosidase H (bglH) from Aspergillus fumigatus (strain CBS 144.89 / FGSC A1163 / CEA10) (Neosartorya fumigata).